The following is a 323-amino-acid chain: MRVIFAGTPEFARVALERLLTAGFTVPLVLTQPDRPAGRGMKLQASPVKQCALQHGIAVAQPLSLRLDGKYPEDAAAAKAAIEAAQADVMVVAAYGLILPQWVLNTPRLGCLNIHASLLPRWRGAAPIHRAIEAGDAETGVTIMQMDAGLDTGDMLLLEKTAISPADTTATLHDRLAQLGGRLIVEALEMAACGGLKPTPQPAEGVTYAHKIDKAESTIDWNQPAEVIARRVRAFDPFPGAATTLGADAIKVWSCEIDSCSRTLDAACGQILSIDADGIGVACGAGSLLRLTVLQRAGGKRLPAADFLRGFPLAPGMVLGAAP.

A (6S)-5,6,7,8-tetrahydrofolate-binding site is contributed by 117 to 120; it reads SLLP.

Belongs to the Fmt family.

The enzyme catalyses L-methionyl-tRNA(fMet) + (6R)-10-formyltetrahydrofolate = N-formyl-L-methionyl-tRNA(fMet) + (6S)-5,6,7,8-tetrahydrofolate + H(+). Attaches a formyl group to the free amino group of methionyl-tRNA(fMet). The formyl group appears to play a dual role in the initiator identity of N-formylmethionyl-tRNA by promoting its recognition by IF2 and preventing the misappropriation of this tRNA by the elongation apparatus. This Acidovorax ebreus (strain TPSY) (Diaphorobacter sp. (strain TPSY)) protein is Methionyl-tRNA formyltransferase.